A 307-amino-acid polypeptide reads, in one-letter code: Aspartate carbamoyltransferase catalytic subunit (307 aa).

2 residues coordinate carbamoyl phosphate: R54 and T55. L-aspartate is bound at residue K83. R104, H132, and Q135 together coordinate carbamoyl phosphate. R165 and R228 together coordinate L-aspartate. 2 residues coordinate carbamoyl phosphate: L267 and P268.

The protein belongs to the aspartate/ornithine carbamoyltransferase superfamily. ATCase family. As to quaternary structure, heterododecamer (2C3:3R2) of six catalytic PyrB chains organized as two trimers (C3), and six regulatory PyrI chains organized as three dimers (R2).

The catalysed reaction is carbamoyl phosphate + L-aspartate = N-carbamoyl-L-aspartate + phosphate + H(+). It participates in pyrimidine metabolism; UMP biosynthesis via de novo pathway; (S)-dihydroorotate from bicarbonate: step 2/3. Catalyzes the condensation of carbamoyl phosphate and aspartate to form carbamoyl aspartate and inorganic phosphate, the committed step in the de novo pyrimidine nucleotide biosynthesis pathway. The chain is Aspartate carbamoyltransferase catalytic subunit from Clostridium botulinum (strain Alaska E43 / Type E3).